An 88-amino-acid polypeptide reads, in one-letter code: UPF0297 protein BPUM_2379 (88 aa).

It belongs to the UPF0297 family.

This chain is UPF0297 protein BPUM_2379, found in Bacillus pumilus (strain SAFR-032).